The chain runs to 47 residues: Large ribosomal subunit protein bL34 (47 aa).

It belongs to the bacterial ribosomal protein bL34 family.

This is Large ribosomal subunit protein bL34 from Rhodococcus opacus (strain B4).